The primary structure comprises 659 residues: MATEQTKGQSSESISSVLSERRKFPPPEAFSSQSHISSMEQYEKLYADAAADPDKYWGDLAEQFHWFKKWDSVLEWNAPYAKWFNGGTTNIAYNCLDVHVGSWRKNKAAIIWEGEEGNERILTYGELHRQVSKFANVLKIAGIKPGDKVAIYMGMVPELVIAVLACARVGAVHNVIFAGFAAHAITERVNDSRAKIVICADGTRRRGSTINLKNIVDEAIINTPSVKNVIVLKVTGEEIHMHDGMDHWWHDLMGLAVDECEPAQVDSEHPLFLLYTSGSTGKPKGILHTTAGYMVHAASSFKYVFDIKDEDIYFCTADIGWITGHTYIIYGPLLNGATVFMYEGAPNYPQWDRFWDIINRHKITILYTAPTAIRAFIRAGNEWVTKHDLSSLRLLGTVGEPINPEAWMWYHKYVGQEKCPIVDTWWQTETGGIMISPMPGATPTKPGTATRPLPGIMVDVVRKDGTPCNANEGGYLVVKRPWPSMLRTIYGDNERYEKTYWSEFPGMYFTGDGARKDDDGYIWIMGRVDDVVNVSGHRLGTSEVESALVSHEAVAEAAVVSRPDEIKGNALVAFVTLKDGYEGDAKLRDSLGKHVAKEIGAIAKPDEIRWAKGLPKTRSGKIMRRLLRELATSNEIKGDVTTLEDLGVIENLREQEDEG.

Positions 1 to 35 (MATEQTKGQSSESISSVLSERRKFPPPEAFSSQSH) are disordered. CoA-binding positions include 205–208 (RRGS), T323, and N347. ATP is bound by residues 399–401 (GEP), 423–428 (DTWWQT), D512, and R527. S535 lines the CoA pocket. R538 is a binding site for ATP. Positions 549, 551, and 554 each coordinate Mg(2+). K621 is modified (N6-acetyllysine).

It belongs to the ATP-dependent AMP-binding enzyme family. It depends on Mg(2+) as a cofactor. Acetylated. Deacetylation by the SIR2-homolog deacetylase activates the enzyme.

The catalysed reaction is acetate + ATP + CoA = acetyl-CoA + AMP + diphosphate. Its function is as follows. Catalyzes the conversion of acetate into acetyl-CoA (AcCoA), an essential intermediate at the junction of anabolic and catabolic pathways. AcsA undergoes a two-step reaction. In the first half reaction, AcsA combines acetate with ATP to form acetyl-adenylate (AcAMP) intermediate. In the second half reaction, it can then transfer the acetyl group from AcAMP to the sulfhydryl group of CoA, forming the product AcCoA. The chain is Acetyl-coenzyme A synthetase from Chlorobaculum tepidum (strain ATCC 49652 / DSM 12025 / NBRC 103806 / TLS) (Chlorobium tepidum).